A 307-amino-acid chain; its full sequence is D-alanine--D-alanine ligase (307 aa).

The ATP-grasp domain maps to 101-301 (KTVMRAAGVD…FGELVRWMVE (201 aa)). Residue 127–182 (PLPPPYVVKPIAEGSSVGVIIVRDGRSHPPQILASEEWTFGEQVLAEPYIAGRELT) participates in ATP binding. 3 residues coordinate Mg(2+): Asp251, Glu268, and Asn270.

Belongs to the D-alanine--D-alanine ligase family. Mg(2+) serves as cofactor. It depends on Mn(2+) as a cofactor.

It localises to the cytoplasm. The enzyme catalyses 2 D-alanine + ATP = D-alanyl-D-alanine + ADP + phosphate + H(+). It participates in cell wall biogenesis; peptidoglycan biosynthesis. In terms of biological role, cell wall formation. This chain is D-alanine--D-alanine ligase, found in Methylobacterium radiotolerans (strain ATCC 27329 / DSM 1819 / JCM 2831 / NBRC 15690 / NCIMB 10815 / 0-1).